The sequence spans 229 residues: MPTSVLELKSVDRHYVQGQNTLTILKAADFTLAPGEMVALVAPSGTGKSTLLHIAGLLEHPDGGDVIVNGQPCAGLADDRRTEIRRKEIGFVYQFHHLLPEFTAIENVMMPQLIAGLSPAEARERAGQLLAYMKLGSRTEHRPSELSGGEQQRVAIARAVANAPLVLLADEPTGNLDPVTAGYVFEALEAIVRHSGLAALIATHNEELAARMDRRVTLSDGRVVELPAK.

The ABC transporter domain occupies Leu6–Leu226. ATP is bound at residue Ala42–Ser49.

This sequence belongs to the ABC transporter superfamily. Lipoprotein translocase (TC 3.A.1.125) family. In terms of assembly, the complex is composed of two ATP-binding proteins (LolD) and two transmembrane proteins (LolC and LolE).

It is found in the cell inner membrane. Functionally, part of the ABC transporter complex LolCDE involved in the translocation of mature outer membrane-directed lipoproteins, from the inner membrane to the periplasmic chaperone, LolA. Responsible for the formation of the LolA-lipoprotein complex in an ATP-dependent manner. In Chelativorans sp. (strain BNC1), this protein is Lipoprotein-releasing system ATP-binding protein LolD.